A 62-amino-acid polypeptide reads, in one-letter code: UPF0291 protein CLD_1956 (62 aa).

The protein belongs to the UPF0291 family.

The protein resides in the cytoplasm. The sequence is that of UPF0291 protein CLD_1956 from Clostridium botulinum (strain Okra / Type B1).